We begin with the raw amino-acid sequence, 451 residues long: Trigger factor (451 aa).

The PPIase FKBP-type domain maps to 165 to 250 (DDKLTIDFEG…LHQIQVREAL (86 aa)).

The protein belongs to the FKBP-type PPIase family. Tig subfamily.

It localises to the cytoplasm. The enzyme catalyses [protein]-peptidylproline (omega=180) = [protein]-peptidylproline (omega=0). Functionally, involved in protein export. Acts as a chaperone by maintaining the newly synthesized protein in an open conformation. Functions as a peptidyl-prolyl cis-trans isomerase. The protein is Trigger factor of Helicobacter pylori (strain P12).